A 115-amino-acid chain; its full sequence is Aspartate 1-decarboxylase (115 aa).

The Schiff-base intermediate with substrate; via pyruvic acid role is filled by serine 25. A Pyruvic acid (Ser) modification is found at serine 25. Residue threonine 57 participates in substrate binding. The active-site Proton donor is the tyrosine 58. 72–74 (GAA) is a substrate binding site.

The protein belongs to the PanD family. In terms of assembly, heterooctamer of four alpha and four beta subunits. It depends on pyruvate as a cofactor. In terms of processing, is synthesized initially as an inactive proenzyme, which is activated by self-cleavage at a specific serine bond to produce a beta-subunit with a hydroxyl group at its C-terminus and an alpha-subunit with a pyruvoyl group at its N-terminus.

Its subcellular location is the cytoplasm. It carries out the reaction L-aspartate + H(+) = beta-alanine + CO2. The protein operates within cofactor biosynthesis; (R)-pantothenate biosynthesis; beta-alanine from L-aspartate: step 1/1. Functionally, catalyzes the pyruvoyl-dependent decarboxylation of aspartate to produce beta-alanine. In Campylobacter fetus subsp. fetus (strain 82-40), this protein is Aspartate 1-decarboxylase.